The chain runs to 361 residues: Cilia- and flagella-associated protein 263 (361 aa).

Belongs to the CFAP263 family. Forms a complex with CFAP184; the interaction is required for functional activity in cilia.

Its subcellular location is the cell projection. The protein resides in the cilium. Its function is as follows. In complex with CFAP263, acts as a regulator of ciliary beating that connects radial spoke 3 (RS3) to the inner dynein arm (IDA) and the nexin-dynein regulatory complex (N-DRC). The complex is positioned parallel to N-DRC and forms a connection between the arch at the base of RS3, the IDA tail and N-DRC. The protein is Cilia- and flagella-associated protein 263 (CFAP263) of Tetrahymena thermophila (strain SB210).